The chain runs to 224 residues: MSLSNSLGLLGRKVGMMRLFTDDGDAVPVTVVDVSNNRVTQVKTQENDGYVSLQVTFGSRKASRVTKPEAGHLAKAGVEAGEIIREFRVTPEVAGKYAAGAAVPVADVFAVGQKVDVQGTSIGKGFAGTIKRHNFGSQRASHGNSRSHNVPGSIGMAQDPGRVFPGKKMTGHLGDVTVTTQNLDVVRIDEARQLLLIKGAVPGSKGGFVTVRPAVKAQASKGAN.

Q158 carries the N5-methylglutamine modification.

This sequence belongs to the universal ribosomal protein uL3 family. Part of the 50S ribosomal subunit. Forms a cluster with proteins L14 and L19. Methylated by PrmB.

Functionally, one of the primary rRNA binding proteins, it binds directly near the 3'-end of the 23S rRNA, where it nucleates assembly of the 50S subunit. In Acidovorax sp. (strain JS42), this protein is Large ribosomal subunit protein uL3.